Consider the following 122-residue polypeptide: Fluoride-specific ion channel FluC 2 (122 aa).

The next 4 helical transmembrane spans lie at 1 to 21 (MAWLYVGCGGIAGTLARFLLS), 33 to 53 (PLGTLFVNLSGAFLLGLLLAL), 62 to 82 (VTLALGTGFVGAYTTFSTFTY), and 102 to 122 (GSILGGLLLAWLGWLAAGSLF). Na(+) contacts are provided by Gly72 and Thr75.

This sequence belongs to the fluoride channel Fluc/FEX (TC 1.A.43) family.

Its subcellular location is the cell membrane. It catalyses the reaction fluoride(in) = fluoride(out). With respect to regulation, na(+) is not transported, but it plays an essential structural role and its presence is essential for fluoride channel function. Its function is as follows. Fluoride-specific ion channel. Important for reducing fluoride concentration in the cell, thus reducing its toxicity. The sequence is that of Fluoride-specific ion channel FluC 2 from Moorella thermoacetica (strain ATCC 39073 / JCM 9320).